A 124-amino-acid polypeptide reads, in one-letter code: Large ribosomal subunit protein bL12 (124 aa).

Residues 93 to 124 (GAPSTVKEGASKDEAEEAKKKLEEAGASVELK) are disordered. A compositionally biased stretch (basic and acidic residues) spans 101 to 116 (GASKDEAEEAKKKLEE).

The protein belongs to the bacterial ribosomal protein bL12 family. As to quaternary structure, homodimer. Part of the ribosomal stalk of the 50S ribosomal subunit. Forms a multimeric L10(L12)X complex, where L10 forms an elongated spine to which 2 to 4 L12 dimers bind in a sequential fashion. Binds GTP-bound translation factors.

Functionally, forms part of the ribosomal stalk which helps the ribosome interact with GTP-bound translation factors. Is thus essential for accurate translation. In Marinobacter nauticus (strain ATCC 700491 / DSM 11845 / VT8) (Marinobacter aquaeolei), this protein is Large ribosomal subunit protein bL12.